The primary structure comprises 205 residues: MNSYKHPLRVGVGGPVGSGKTALLEALCKAMRDTWQLAVVTNDIYTKEDQRILTEAGALAPERIVGVETGGCPHTAIREDASMNLAAVEALSEKFGNLDLIFVESGGDNLSATFSPELADLTIYVIDVAEGEKIPRKGGPGITKSDFLVINKTDLAPYVGASLEVMASDTQRMRGDRPWTFTNLKQGDGLSTIIAFLEDKGMLGK.

Residue 14–21 participates in GTP binding; the sequence is GPVGSGKT.

As to quaternary structure, homodimer. UreD, UreF and UreG form a complex that acts as a GTP-hydrolysis-dependent molecular chaperone, activating the urease apoprotein by helping to assemble the nickel containing metallocenter of UreC. The UreE protein probably delivers the nickel.

The protein localises to the cytoplasm. Activation of apourease within the UreDFG-apoprotein complex is inhibited by zinc, copper and cobalt. In terms of biological role, facilitates the functional incorporation of the urease nickel metallocenter. This process requires GTP hydrolysis, probably effectuated by UreG. The chain is Urease accessory protein UreG from Klebsiella aerogenes (Enterobacter aerogenes).